The sequence spans 446 residues: D(1A) dopamine receptor (446 aa).

Residues 1-23 (MRTLNTSTMDGTGLVVERDFSFR) lie on the Extracellular side of the membrane. N-linked (GlcNAc...) asparagine glycosylation occurs at Asn5. The chain crosses the membrane as a helical span at residues 24 to 49 (ILTACFLSLLILSTLLGNTLVCAAVI). Over 50–60 (RFRHLRSKVTN) the chain is Cytoplasmic. Residues 61–87 (FFVISLAVSDLLVAVLVMPWKAVAEIA) form a helical membrane-spanning segment. At 88 to 96 (GFWPFGSFC) the chain is on the extracellular side. The cysteines at positions 96 and 186 are disulfide-linked. Residues 97–119 (NIWVAFDIMCSTASILNLCVISV) traverse the membrane as a helical segment. Over 120-138 (DRYWAISSPFRYERKMTPK) the chain is Cytoplasmic. Residues 139–163 (AAFILISVAWTLSVLISFIPVQLSW) form a helical membrane-spanning segment. The Extracellular segment spans residues 164-192 (HKAKPTSPSDGNVTSLGKTTHNCDSSLSR). Residues 193–218 (TYAISSSLISFYIPVAIMIVTYTRIY) form a helical membrane-spanning segment. The Cytoplasmic portion of the chain corresponds to 219-272 (RIAQKQIRRISALERAAVHAKNCQTTAGNGNPAECSQPESSFKMSFKRETKVLK). Residues 273–299 (TLSVIMGVFVCCWLPFFILNCMVPFCG) form a helical membrane-spanning segment. The Extracellular segment spans residues 300–312 (SGETKPFCIDSIT). The chain crosses the membrane as a helical span at residues 313 to 337 (FDVFVWFGWANSSLNPIIYAFNADF). Over 338 to 446 (RKAFSTLLGC…PITQNGQHPT (109 aa)) the chain is Cytoplasmic. Residues Cys347 and Cys351 are each lipidated (S-palmitoyl cysteine).

Belongs to the G-protein coupled receptor 1 family. In terms of assembly, interacts with DNAJC14 via its C-terminus. Interacts with DRD2. Interacts with DORIP1.

It localises to the cell membrane. The protein resides in the endoplasmic reticulum membrane. Its subcellular location is the cell projection. The protein localises to the cilium membrane. It is found in the dendrite. It localises to the dendritic spine. In terms of biological role, dopamine receptor whose activity is mediated by G proteins which activate adenylyl cyclase. The sequence is that of D(1A) dopamine receptor (DRD1) from Sus scrofa (Pig).